Here is a 578-residue protein sequence, read N- to C-terminus: Zinc finger protein with KRAB and SCAN domains 8 (578 aa).

Residues 1-20 (MAEESRKPSAPSPPDQTPEE) are disordered. Ser-12 bears the Phosphoserine mark. Residue Lys-26 forms a Glycyl lysine isopeptide (Lys-Gly) (interchain with G-Cter in SUMO2) linkage. One can recognise an SCAN box domain in the interval 51–133 (RLRFRQLRYQ…TLLEDLERQI (83 aa)). Positions 158 to 205 (ASAPEPPNTQLQSEATQHKSPVPQESQERAMSTSQSPTRSQKGSSGDQ) are disordered. Residues 165–205 (NTQLQSEATQHKSPVPQESQERAMSTSQSPTRSQKGSSGDQ) show a composition bias toward polar residues. Residues Lys-176 and Lys-199 each participate in a glycyl lysine isopeptide (Lys-Gly) (interchain with G-Cter in SUMO2) cross-link. Ser-201 carries the post-translational modification Phosphoserine. The KRAB domain occupies 220 to 316 (EKIEDMAVSL…GRLERQRGNP (97 aa)). Residues Lys-221, Lys-272, and Lys-288 each participate in a glycyl lysine isopeptide (Lys-Gly) (interchain with G-Cter in SUMO2) cross-link. C2H2-type zinc fingers lie at residues 322-344 (HKCD…WRIH) and 350-372 (YQCN…QDIH). Glycyl lysine isopeptide (Lys-Gly) (interchain with G-Cter in SUMO2) cross-links involve residues Lys-374 and Lys-376. C2H2-type zinc fingers lie at residues 378 to 400 (YHCK…QRIH), 406 to 428 (YQCN…QRIH), 434 to 456 (YECN…QRIH), 462 to 484 (YECD…QRSH), 490 to 512 (YKCN…QRIH), 518 to 540 (YKCK…LRIH), and 546 to 568 (YQCN…QRIH). Residues Lys-413 and Lys-441 each participate in a glycyl lysine isopeptide (Lys-Gly) (interchain with G-Cter in SUMO2) cross-link. Lys-502 is covalently cross-linked (Glycyl lysine isopeptide (Lys-Gly) (interchain with G-Cter in SUMO2)). A Glycyl lysine isopeptide (Lys-Gly) (interchain with G-Cter in SUMO2) cross-link involves residue Lys-572.

This sequence belongs to the krueppel C2H2-type zinc-finger protein family.

Its subcellular location is the nucleus. Functionally, may be involved in transcriptional regulation. The sequence is that of Zinc finger protein with KRAB and SCAN domains 8 (ZKSCAN8) from Homo sapiens (Human).